A 128-amino-acid chain; its full sequence is MFAVIKTGGRQYRVVPEDVLEVGKIEGDVGTIVQLGEVLMLGGDTPLIGLPTVAGASVAAEVLDHKRGPKVISFKKRRRKNSKRKRGYRDEITVLRITEILADGKSPSVGPRPKRVKAEPAPAADAAE.

The disordered stretch occupies residues 104–128 (GKSPSVGPRPKRVKAEPAPAADAAE). A compositionally biased stretch (low complexity) spans 119–128 (EPAPAADAAE).

The protein belongs to the bacterial ribosomal protein bL21 family. Part of the 50S ribosomal subunit. Contacts protein L20.

Its function is as follows. This protein binds to 23S rRNA in the presence of protein L20. This chain is Large ribosomal subunit protein bL21, found in Rhodopseudomonas palustris (strain HaA2).